The primary structure comprises 474 residues: 3-isopropylmalate dehydratase large subunit (474 aa).

Residues C355, C415, and C418 each contribute to the [4Fe-4S] cluster site.

This sequence belongs to the aconitase/IPM isomerase family. LeuC type 1 subfamily. As to quaternary structure, heterodimer of LeuC and LeuD. Requires [4Fe-4S] cluster as cofactor.

It carries out the reaction (2R,3S)-3-isopropylmalate = (2S)-2-isopropylmalate. It functions in the pathway amino-acid biosynthesis; L-leucine biosynthesis; L-leucine from 3-methyl-2-oxobutanoate: step 2/4. Its function is as follows. Catalyzes the isomerization between 2-isopropylmalate and 3-isopropylmalate, via the formation of 2-isopropylmaleate. This is 3-isopropylmalate dehydratase large subunit from Shewanella oneidensis (strain ATCC 700550 / JCM 31522 / CIP 106686 / LMG 19005 / NCIMB 14063 / MR-1).